The sequence spans 736 residues: Probable potassium transport system protein Kup 2 (736 aa).

The next 12 membrane-spanning stretches (helical) occupy residues 1-21 (MAIV…LYTA), 42-62 (MLSL…VLIA), 84-104 (GAWL…DSVL), 126-146 (LFDE…VILF), 156-176 (IGKV…IVGV), 204-224 (AAGI…EALY), 239-259 (WPFI…WMLA), 287-307 (AVIL…TGAF), 334-354 (LYIP…LAIF), 364-384 (YGLA…VYLW), 390-410 (VGAI…FIAS), and 414-434 (FLHG…VMYT). 2 disordered regions span residues 649 to 678 (TDTA…DTTS) and 693 to 736 (AEAR…KQKR). 2 stretches are compositionally biased toward low complexity: residues 660–677 (PTRA…MDTT) and 700–709 (EAAAADAPAE). Basic and acidic residues predominate over residues 710 to 721 (QGDKGDKGKAEN).

This sequence belongs to the HAK/KUP transporter (TC 2.A.72) family.

It is found in the cell membrane. The enzyme catalyses K(+)(in) + H(+)(in) = K(+)(out) + H(+)(out). Transport of potassium into the cell. Likely operates as a K(+):H(+) symporter. The chain is Probable potassium transport system protein Kup 2 from Bifidobacterium longum (strain NCC 2705).